The primary structure comprises 100 residues: Urease subunit gamma (100 aa).

The protein belongs to the urease gamma subunit family. In terms of assembly, heterotrimer of UreA (gamma), UreB (beta) and UreC (alpha) subunits. Three heterotrimers associate to form the active enzyme.

Its subcellular location is the cytoplasm. The enzyme catalyses urea + 2 H2O + H(+) = hydrogencarbonate + 2 NH4(+). Its pathway is nitrogen metabolism; urea degradation; CO(2) and NH(3) from urea (urease route): step 1/1. This chain is Urease subunit gamma, found in Actinobacillus pleuropneumoniae serotype 5b (strain L20).